A 47-amino-acid chain; its full sequence is MKKFRWVILIIVALVCLLLWAQVFNIMCDQDVQFFNGICAINKFIPW.

The chain crosses the membrane as a helical span at residues 6 to 26; that stretch reads WVILIIVALVCLLLWAQVFNI.

It belongs to the MgrB family. As to quaternary structure, may form homooligomers. Probably interacts with the periplasmic domain of PhoQ.

The protein resides in the cell inner membrane. In terms of biological role, phoP-regulated transcription is redox-sensitive, being activated when the periplasm becomes more reducing. MgrB acts between DsbA/DsbB and PhoP/PhoQ in this pathway. Represses PhoP/PhoQ signaling, possibly by binding to the periplasmic domain of PhoQ, altering its activity and that of downstream effector PhoP. The chain is PhoP/PhoQ regulator MgrB from Citrobacter koseri (strain ATCC BAA-895 / CDC 4225-83 / SGSC4696).